The chain runs to 203 residues: ATP-dependent Clp protease proteolytic subunit 1 (203 aa).

Residue S98 is the Nucleophile of the active site. The active site involves H123.

Belongs to the peptidase S14 family. As to quaternary structure, fourteen ClpP subunits assemble into 2 heptameric rings which stack back to back to give a disk-like structure with a central cavity, resembling the structure of eukaryotic proteasomes.

The protein resides in the cytoplasm. It catalyses the reaction Hydrolysis of proteins to small peptides in the presence of ATP and magnesium. alpha-casein is the usual test substrate. In the absence of ATP, only oligopeptides shorter than five residues are hydrolyzed (such as succinyl-Leu-Tyr-|-NHMec, and Leu-Tyr-Leu-|-Tyr-Trp, in which cleavage of the -Tyr-|-Leu- and -Tyr-|-Trp bonds also occurs).. In terms of biological role, cleaves peptides in various proteins in a process that requires ATP hydrolysis. Has a chymotrypsin-like activity. Plays a major role in the degradation of misfolded proteins. This is ATP-dependent Clp protease proteolytic subunit 1 from Chlamydia felis (strain Fe/C-56) (Chlamydophila felis).